The sequence spans 599 residues: Fructan 1-exohydrolase (599 aa).

An N-terminal signal peptide occupies residues 1–16; it reads MAQAWAFLLLPALALA. The active site involves aspartate 78. Residues asparagine 171, asparagine 239, and asparagine 251 are each glycosylated (N-linked (GlcNAc...) asparagine). Cysteine 449 and cysteine 495 are joined by a disulfide.

It belongs to the glycosyl hydrolase 32 family.

It carries out the reaction Hydrolysis of terminal, non-reducing (2-&gt;1)-linked beta-D-fructofuranose residues in fructans.. Its activity is regulated as follows. Inhibited by sucrose. Hydrolyzes inulin-type beta-(2,1)-fructans. May play a role as a beta-(2,1)-trimmer during graminan biosynthesis. In Hordeum vulgare (Barley), this protein is Fructan 1-exohydrolase.